A 92-amino-acid chain; its full sequence is Probable Fe(2+)-trafficking protein (92 aa).

Belongs to the Fe(2+)-trafficking protein family.

Could be a mediator in iron transactions between iron acquisition and iron-requiring processes, such as synthesis and/or repair of Fe-S clusters in biosynthetic enzymes. The sequence is that of Probable Fe(2+)-trafficking protein from Shewanella oneidensis (strain ATCC 700550 / JCM 31522 / CIP 106686 / LMG 19005 / NCIMB 14063 / MR-1).